A 121-amino-acid chain; its full sequence is Large ribosomal subunit protein bL12 (121 aa).

This sequence belongs to the bacterial ribosomal protein bL12 family. Homodimer. Part of the ribosomal stalk of the 50S ribosomal subunit. Forms a multimeric L10(L12)X complex, where L10 forms an elongated spine to which 2 to 4 L12 dimers bind in a sequential fashion. Binds GTP-bound translation factors.

Functionally, forms part of the ribosomal stalk which helps the ribosome interact with GTP-bound translation factors. Is thus essential for accurate translation. In Psychromonas ingrahamii (strain DSM 17664 / CCUG 51855 / 37), this protein is Large ribosomal subunit protein bL12.